The sequence spans 118 residues: Hydrogenase maturation factor HypA (118 aa).

Histidine 2 lines the Ni(2+) pocket. Residues cysteine 73, cysteine 76, cysteine 89, and cysteine 92 each coordinate Zn(2+).

The protein belongs to the HypA/HybF family.

Its function is as follows. Involved in the maturation of [NiFe] hydrogenases. Required for nickel insertion into the metal center of the hydrogenase. The protein is Hydrogenase maturation factor HypA of Shewanella sp. (strain MR-7).